The chain runs to 3184 residues: Cilia and flagella-associated protein 47 (3184 aa).

Residues 1729–1851 form the Calponin-homology (CH) domain; sequence SDSERILLSW…LCVYLYERLP (123 aa). The disordered stretch occupies residues 2491–2514; that stretch reads RDEEESQEETDTEKDFSSQETPSD. Acidic residues predominate over residues 2493–2502; that stretch reads EEESQEETDT.

Interacts with CFAP65. In terms of tissue distribution, highly expressed in spermatzoa (at protein level).

Its subcellular location is the cytoplasm. It localises to the cytoskeleton. The protein resides in the flagellum basal body. Its function is as follows. Plays a role in flagellar formation and sperm motility. This chain is Cilia and flagella-associated protein 47, found in Mus musculus (Mouse).